A 286-amino-acid polypeptide reads, in one-letter code: Pantothenate synthetase (286 aa).

30-37 (MGNLHDGH) contributes to the ATP binding site. Residue histidine 37 is the Proton donor of the active site. (R)-pantoate is bound at residue glutamine 61. Residue glutamine 61 coordinates beta-alanine. 148 to 151 (GKKD) serves as a coordination point for ATP. Position 154 (glutamine 154) interacts with (R)-pantoate. Residues valine 177 and 185–188 (LSSR) contribute to the ATP site.

It belongs to the pantothenate synthetase family. Homodimer.

It localises to the cytoplasm. The catalysed reaction is (R)-pantoate + beta-alanine + ATP = (R)-pantothenate + AMP + diphosphate + H(+). It functions in the pathway cofactor biosynthesis; (R)-pantothenate biosynthesis; (R)-pantothenate from (R)-pantoate and beta-alanine: step 1/1. Catalyzes the condensation of pantoate with beta-alanine in an ATP-dependent reaction via a pantoyl-adenylate intermediate. The sequence is that of Pantothenate synthetase from Psychrobacter sp. (strain PRwf-1).